The sequence spans 49 residues: Large ribosomal subunit protein bL33B (49 aa).

Belongs to the bacterial ribosomal protein bL33 family.

The chain is Large ribosomal subunit protein bL33B from Shouchella clausii (strain KSM-K16) (Alkalihalobacillus clausii).